The following is a 448-amino-acid chain: Probable sodium-coupled neutral amino acid transporter 6 (448 aa).

Polar residues-rich tracts occupy residues 1 to 12 and 26 to 36; these read MQASDSSINTLD and LLANSPQRRSS. The interval 1 to 36 is disordered; sequence MQASDSSINTLDGHQVSAGRDESTPLLANSPQRRSS. The next 5 helical transmembrane spans lie at 40–60, 69–89, 117–137, 164–184, and 185–205; these read SFGFAVFNLMNAIMGSGILGL, ILGFSALLLIVALLAAYSIHL, LVACTILIQNVGAMSSYLFII, LLIITSVCIVLPLALLPKIGF, and LGYTSSLSFFFMVYFAVVIVI. An intrachain disulfide couples C212 to C232. N218 and N228 each carry an N-linked (GlcNAc...) asparagine glycan. A run of 6 helical transmembrane segments spans residues 244 to 264, 281 to 301, 321 to 341, 365 to 385, 388 to 408, and 425 to 445; these read AFALPTMAFSFLCHTSVLPIY, VGIALSFLIYYISALFGYLTF, VLIITVRLCILLAVLLTVPLI, ILVTLVLNIIIVLLAIYVPDM, VFGVVGSTTSTCLLFVFPGLF, and ACGLLVLGICIGACSLTLIIM.

It belongs to the amino acid/polyamine transporter 2 family.

It is found in the cell membrane. In terms of biological role, probable sodium-dependent amino acid/proton antiporter, could be a neuronal transporter for glutamate. The chain is Probable sodium-coupled neutral amino acid transporter 6 (slc38a6) from Xenopus tropicalis (Western clawed frog).